The chain runs to 74 residues: UPF0435 protein GTNG_0390 (74 aa).

Belongs to the UPF0435 family.

This Geobacillus thermodenitrificans (strain NG80-2) protein is UPF0435 protein GTNG_0390.